The sequence spans 474 residues: Methylenetetrahydrofolate--tRNA-(uracil-5-)-methyltransferase TrmFO (474 aa).

9-14 contacts FAD; sequence GGGLAG. Positions 425-451 are disordered; sequence PPLERMPRNETGKRLRGPEKAALKKRA. Positions 429-451 are enriched in basic and acidic residues; sequence RMPRNETGKRLRGPEKAALKKRA.

The protein belongs to the MnmG family. TrmFO subfamily. It depends on FAD as a cofactor.

The protein resides in the cytoplasm. It carries out the reaction uridine(54) in tRNA + (6R)-5,10-methylene-5,6,7,8-tetrahydrofolate + NADH + H(+) = 5-methyluridine(54) in tRNA + (6S)-5,6,7,8-tetrahydrofolate + NAD(+). It catalyses the reaction uridine(54) in tRNA + (6R)-5,10-methylene-5,6,7,8-tetrahydrofolate + NADPH + H(+) = 5-methyluridine(54) in tRNA + (6S)-5,6,7,8-tetrahydrofolate + NADP(+). Catalyzes the folate-dependent formation of 5-methyl-uridine at position 54 (M-5-U54) in all tRNAs. In Methylorubrum populi (strain ATCC BAA-705 / NCIMB 13946 / BJ001) (Methylobacterium populi), this protein is Methylenetetrahydrofolate--tRNA-(uracil-5-)-methyltransferase TrmFO.